Reading from the N-terminus, the 293-residue chain is MIDLTIKCKEKVPSRAFVVGYPIHHSKSPKIHNFWLKQYGLQGEYLAQEVKLEEFSDFLTSTKKRGFCGGNVTLPYKQEAFRLANYKDEVATMIGAANTLWYEGDKLCATNSDAYGFSANLDDSAPNWVGETALIFGAGGAARAILYALKKRGFERICLLNRTRQRADNLAEHFGKPVEVHDWHNVGEILYEADLIVNTTSVGMTDPHGWKTGSLFCDFQKTKTTTLVTDIVYTPLTTPFLQQAKAHGLRTVDGLGMLLHQAVPGFERWFGITPQVTKALRTKILEDMGEERG.

Residues 26-28 (SKS) and threonine 73 contribute to the shikimate site. The active-site Proton acceptor is the lysine 77. Glutamate 89 contacts NADP(+). Residues asparagine 98 and aspartate 113 each contribute to the shikimate site. Residues 137–141 (GAGGA), 161–166 (NRTRQR), and isoleucine 231 contribute to the NADP(+) site. Tyrosine 233 contributes to the shikimate binding site. Glycine 254 contacts NADP(+).

This sequence belongs to the shikimate dehydrogenase family. As to quaternary structure, homodimer.

It catalyses the reaction shikimate + NADP(+) = 3-dehydroshikimate + NADPH + H(+). The protein operates within metabolic intermediate biosynthesis; chorismate biosynthesis; chorismate from D-erythrose 4-phosphate and phosphoenolpyruvate: step 4/7. In terms of biological role, involved in the biosynthesis of the chorismate, which leads to the biosynthesis of aromatic amino acids. Catalyzes the reversible NADPH linked reduction of 3-dehydroshikimate (DHSA) to yield shikimate (SA). This chain is Shikimate dehydrogenase (NADP(+)), found in Bartonella quintana (strain Toulouse) (Rochalimaea quintana).